We begin with the raw amino-acid sequence, 512 residues long: MDFVLSALQRDSWGIAAIILVSIWALHSFHRSRKLQIPVPYVGKCGILGPWISALQWESKARELVQEGYEKHGNFAFKVALLNRWEVCICNEDMIREYKNLMDNQFSAIAVTSELFQIKWTAPGTEEGAHKISIPLLGKALTWQRNRSAAQNDPYFSEFVEEFLYAWKEEVPVPENGDYELPCFETGARVVAHLTARSLVGYPLCRNPEIVNLFTDYGSAVPTSGFFIAMFPEIMKPFVANFCSAPRISKRLQAILLEEFAKRREEGGIESTDIMGWLRNWTDQNEPGVYGDLEITSSIIATIFGAIHTTTQVLVHCLFELATRPEYVEPLRVEIQSALEEHGGWVKEGIEGMVKLDSFIKECQRFNPLDAGSLARRATKDFTFKNGLTIPEGTFVFAPNGPILFDDTLYPEARQFDGYRFYNLGQKTGKPQDFRFAATNQKYLQFGDGRHTCPGRWMASDEIRLMLAHILMNYDIATKDNKGRPENWIFKKILFPDMKAVVILKARKSVSA.

Transmembrane regions (helical) follow at residues 3–23 (FVLS…LVSI) and 35–55 (LQIP…ISAL). Cys453 contributes to the heme binding site.

This sequence belongs to the cytochrome P450 family. Heme is required as a cofactor.

The protein resides in the membrane. The protein operates within secondary metabolite biosynthesis. Functionally, cytochrome P450 monooxygenase; part of the gene cluster that mediates the biosynthesis of paxilline, a mycotoxin that acts as an inhibitor of mammalian maxi-K channels. PaxG, the geranylgeranyl diphosphate (GGPP) synthase is proposed to catalyze the first step in paxilline biosynthesis. Condensation of indole-3-glycerol phosphate with GGPP by paxC then forms 3-geranylgeranylindole (3-GGI), followed by epoxidation and cyclization of this intermediate (by paxM and paxB) to form paspaline. Paspaline is subsequently converted to 13-desoxypaxilline by paxP, the latter being then converted to paxilline by paxQ. Finally paxilline can be mono- and di-prenylated by paxD. PaxQ can also utilized beta-paxitriol and alpha-PC-M6 as substrates converting them to alpha-paxitriol. The polypeptide is Cytochrome P450 monooxygenase paxQ (Penicillium paxilli).